We begin with the raw amino-acid sequence, 198 residues long: Dephospho-CoA kinase (198 aa).

The DPCK domain occupies 3-198 (IVGITGGIGS…LLAKERLELA (196 aa)). 11–16 (GSGKTT) is a binding site for ATP.

Belongs to the CoaE family.

The protein resides in the cytoplasm. The catalysed reaction is 3'-dephospho-CoA + ATP = ADP + CoA + H(+). The protein operates within cofactor biosynthesis; coenzyme A biosynthesis; CoA from (R)-pantothenate: step 5/5. Functionally, catalyzes the phosphorylation of the 3'-hydroxyl group of dephosphocoenzyme A to form coenzyme A. The chain is Dephospho-CoA kinase from Dehalococcoides mccartyi (strain ATCC BAA-2266 / KCTC 15142 / 195) (Dehalococcoides ethenogenes (strain 195)).